The primary structure comprises 616 residues: ATP-dependent zinc metalloprotease FtsH 3 (616 aa).

Topologically, residues 1 to 9 are cytoplasmic; it reads MSKNNKKWR. A helical transmembrane segment spans residues 10–30; that stretch reads NAGLYALLLIVVLALASAFFD. The Lumenal portion of the chain corresponds to 31–108; sequence RPTQTRETLS…VQPQSDEGFW (78 aa). Residues 109–129 traverse the membrane as a helical segment; it reads FRIASTLFLPILLLVGIFFLF. Residues 130–616 are Cytoplasmic-facing; the sequence is RRAQSGPGSQ…NNNAKLALLV (487 aa). 201–208 contributes to the ATP binding site; the sequence is GPPGTGKT. Zn(2+) is bound at residue His423. The active site involves Glu424. The Zn(2+) site is built by His427 and Asp504.

In the central section; belongs to the AAA ATPase family. The protein in the C-terminal section; belongs to the peptidase M41 family. In terms of assembly, homohexamer (Potential). Part of a large complex that includes FtsH2 and PSII. Coimmunoprecipitates with YidC. It depends on Zn(2+) as a cofactor.

It is found in the cellular thylakoid membrane. In terms of biological role, acts as a processive, ATP-dependent zinc metallopeptidase for both cytoplasmic and membrane proteins. Plays a role in the quality control of integral membrane proteins. The protein is ATP-dependent zinc metalloprotease FtsH 3 of Synechocystis sp. (strain ATCC 27184 / PCC 6803 / Kazusa).